Consider the following 467-residue polypeptide: 3-isopropylmalate dehydratase large subunit (467 aa).

[4Fe-4S] cluster contacts are provided by Cys347, Cys407, and Cys410.

This sequence belongs to the aconitase/IPM isomerase family. LeuC type 1 subfamily. As to quaternary structure, heterodimer of LeuC and LeuD. Requires [4Fe-4S] cluster as cofactor.

The enzyme catalyses (2R,3S)-3-isopropylmalate = (2S)-2-isopropylmalate. It functions in the pathway amino-acid biosynthesis; L-leucine biosynthesis; L-leucine from 3-methyl-2-oxobutanoate: step 2/4. Its function is as follows. Catalyzes the isomerization between 2-isopropylmalate and 3-isopropylmalate, via the formation of 2-isopropylmaleate. The chain is 3-isopropylmalate dehydratase large subunit from Synechococcus sp. (strain JA-2-3B'a(2-13)) (Cyanobacteria bacterium Yellowstone B-Prime).